A 186-amino-acid polypeptide reads, in one-letter code: UPF0301 protein Mmc1_0726 (186 aa).

This sequence belongs to the UPF0301 (AlgH) family.

This chain is UPF0301 protein Mmc1_0726, found in Magnetococcus marinus (strain ATCC BAA-1437 / JCM 17883 / MC-1).